Here is an 88-residue protein sequence, read N- to C-terminus: Elongation factor 1-beta (88 aa).

The protein belongs to the EF-1-beta/EF-1-delta family.

Functionally, promotes the exchange of GDP for GTP in EF-1-alpha/GDP, thus allowing the regeneration of EF-1-alpha/GTP that could then be used to form the ternary complex EF-1-alpha/GTP/AAtRNA. This is Elongation factor 1-beta from Methanosphaera stadtmanae (strain ATCC 43021 / DSM 3091 / JCM 11832 / MCB-3).